The primary structure comprises 588 residues: Disabled homolog 1 (588 aa).

The segment at 1 to 26 (MSTETELQVAVKTSAKKDSRKKGQDR) is disordered. A compositionally biased stretch (basic and acidic residues) spans 15 to 26 (AKKDSRKKGQDR). One can recognise a PID domain in the interval 36–189 (KGEGVRYKAK…CEQAVYQTIL (154 aa)). Phosphotyrosine is present on residues Tyr-198, Tyr-220, and Tyr-232. Disordered regions lie at residues 417-443 (LTPL…RQKM), 451-470 (FQMA…PSLT), and 502-588 (LTPV…QAGS). A compositionally biased stretch (polar residues) spans 424-436 (PGTSDSTRSSPQT). 2 stretches are compositionally biased toward low complexity: residues 503–512 (TPVTSTTPST) and 520–534 (PRQS…SHAS). The residue at position 524 (Ser-524) is a Phosphoserine; by CDK5. Residues 537 to 546 (TTDDIFEEGF) are compositionally biased toward acidic residues.

Associates with the SH2 domains of SRC, FYN and ABL. Interacts (phosphorylated on tyrosine residues) with CRK and CRKL (via respective SH2 domain). Interacts with SIAH1, LRP8 and VLDLR. Interacts with LRP1. Interacts with APLP1 (via NPXY motif). Interacts with DAB2IP. Interacts with ZSWIM8. Post-translationally, phosphorylated by FYN on Tyr-198 and Tyr-220 upon reelin induction in embryonic neurons. Also phosphorylated on Ser-524 independently of reelin signaling. Ubiquitinated by various cullin-5-RING E3 ubiquitin-protein ligase complexes (ECS complexes) following ligand-binding and phosphorylation, leading to its degradation. Ubiquitinated by the ECS(SOCS7) complex in the cortical plate of the developing cerebral cortex following ligand-binding and phosphorylation by FYN, leading to its degradation by the proteasome. Recognized by ZSWIM8 through a disorder targets misorder mechanism that eliminates misfolded DAB1 via ubiquitination and proteasomal degradation. Mainly expressed in brain.

It localises to the cytoplasm. Functionally, signaling adapter of the reelin-mediated signaling pathway, which regulates the migration and differentiation of postmitotic neurons during brain development. Mediates intracellular transduction of Reelin signaling following reelin (RELN)-binding to its receptor: acts by docking proteins through its phosphotyrosine residues and PID domain. In Homo sapiens (Human), this protein is Disabled homolog 1 (DAB1).